Reading from the N-terminus, the 178-residue chain is MATIRIHDEKNTLIEHQEEVARFLDEQEVIYEQWNIEKLPSELSEKYDLTEDEKERILAVFDTEIQDISARRGYQSQDVISLSDTTPNLDELLKNFQREHHHTDDEVRFIVSGHGIFVIQGKDGTFFDVRLNPGDLISVPENIRHYFTLQEDRRVVAIRIFVTTEGWVPIYENESVQN.

The Fe(2+) site is built by H100, H102, E106, and H145. The Ni(2+) site is built by H100, H102, E106, and H145.

Belongs to the acireductone dioxygenase (ARD) family. In terms of assembly, monomer. It depends on Fe(2+) as a cofactor. The cofactor is Ni(2+).

It catalyses the reaction 1,2-dihydroxy-5-(methylsulfanyl)pent-1-en-3-one + O2 = 3-(methylsulfanyl)propanoate + CO + formate + 2 H(+). The enzyme catalyses 1,2-dihydroxy-5-(methylsulfanyl)pent-1-en-3-one + O2 = 4-methylsulfanyl-2-oxobutanoate + formate + 2 H(+). It functions in the pathway amino-acid biosynthesis; L-methionine biosynthesis via salvage pathway; L-methionine from S-methyl-5-thio-alpha-D-ribose 1-phosphate: step 5/6. Functionally, catalyzes 2 different reactions between oxygen and the acireductone 1,2-dihydroxy-3-keto-5-methylthiopentene (DHK-MTPene) depending upon the metal bound in the active site. Fe-containing acireductone dioxygenase (Fe-ARD) produces formate and 2-keto-4-methylthiobutyrate (KMTB), the alpha-ketoacid precursor of methionine in the methionine recycle pathway. Ni-containing acireductone dioxygenase (Ni-ARD) produces methylthiopropionate, carbon monoxide and formate, and does not lie on the methionine recycle pathway. In Bacillus velezensis (strain DSM 23117 / BGSC 10A6 / LMG 26770 / FZB42) (Bacillus amyloliquefaciens subsp. plantarum), this protein is Acireductone dioxygenase.